A 406-amino-acid polypeptide reads, in one-letter code: 26S proteasome regulatory subunit 8 (406 aa).

At A2 the chain carries N-acetylalanine. A Phosphoserine modification is found at S120. The tract at residues 186–406 (VLLYGPPGTG…KNMSIKKLWK (221 aa)) is may mediate interaction with PRPF9. 190 to 197 (GPPGTGKT) is an ATP binding site. Position 222 is an N6-acetyllysine (K222).

Belongs to the AAA ATPase family. In terms of assembly, component of the 19S proteasome regulatory particle complex. The 26S proteasome consists of a 20S core particle (CP) and two 19S regulatory subunits (RP). The regulatory particle is made of a lid composed of 9 subunits, a base containing 6 ATPases including PSMC5 and few additional components. Component of a complex with USP49 and RUVBL1. Interacts with PRPF19. Interacts with TRIM5. Interacts with NDC80. Interacts with PAAF1. Interacts, in vitro, with the thyroid hormone receptor (in a thyroid hormone T3-dependent manner) and with retinoid X receptor (RXR). Interacts with ERCC6.

Its subcellular location is the cytoplasm. The protein localises to the nucleus. Component of the 26S proteasome, a multiprotein complex involved in the ATP-dependent degradation of ubiquitinated proteins. This complex plays a key role in the maintenance of protein homeostasis by removing misfolded or damaged proteins, which could impair cellular functions, and by removing proteins whose functions are no longer required. Therefore, the proteasome participates in numerous cellular processes, including cell cycle progression, apoptosis, or DNA damage repair. PSMC5 belongs to the heterohexameric ring of AAA (ATPases associated with diverse cellular activities) proteins that unfolds ubiquitinated target proteins that are concurrently translocated into a proteolytic chamber and degraded into peptides. The sequence is that of 26S proteasome regulatory subunit 8 (PSMC5) from Bos taurus (Bovine).